The chain runs to 148 residues: Aspartate carbamoyltransferase regulatory chain (148 aa).

Zn(2+) is bound by residues Cys-106, Cys-111, Cys-134, and Cys-137.

This sequence belongs to the PyrI family. Contains catalytic and regulatory chains. It depends on Zn(2+) as a cofactor.

In terms of biological role, involved in allosteric regulation of aspartate carbamoyltransferase. This Methanococcus vannielii (strain ATCC 35089 / DSM 1224 / JCM 13029 / OCM 148 / SB) protein is Aspartate carbamoyltransferase regulatory chain.